Here is a 76-residue protein sequence, read N- to C-terminus: Dermaseptin-B4 (76 aa).

The first 22 residues, 1 to 22, serve as a signal peptide directing secretion; the sequence is MAFLKKSLFLVLFLGLVSLSIC. Residues 23-43 constitute a propeptide that is removed on maturation; the sequence is EEEKRENKDEIEQEDDEQSEE. Gln73 is subject to Glutamine amide. Residues 75–76 constitute a propeptide that is removed on maturation; it reads EQ.

This sequence belongs to the frog skin active peptide (FSAP) family. Dermaseptin subfamily. In terms of tissue distribution, expressed by the skin glands.

The protein resides in the secreted. Potent antimicrobial peptide with potent activity against Gram-positive and Gram-negative bacteria. Probably acts by disturbing membrane functions with its amphipathic structure. Has an activity of stimulation of insulin release, which may protect the species from being eaten by predators by causing fatal hypoglycemia. Has hemolytic activity. The protein is Dermaseptin-B4 of Phyllomedusa bicolor (Two-colored leaf frog).